The chain runs to 332 residues: Ribosomal RNA small subunit methyltransferase C (332 aa).

Belongs to the methyltransferase superfamily. RsmC family. Monomer.

It is found in the cytoplasm. The catalysed reaction is guanosine(1207) in 16S rRNA + S-adenosyl-L-methionine = N(2)-methylguanosine(1207) in 16S rRNA + S-adenosyl-L-homocysteine + H(+). In terms of biological role, specifically methylates the guanine in position 1207 of 16S rRNA in the 30S particle. This is Ribosomal RNA small subunit methyltransferase C from Pseudomonas putida (strain ATCC 47054 / DSM 6125 / CFBP 8728 / NCIMB 11950 / KT2440).